Here is a 276-residue protein sequence, read N- to C-terminus: MAIKTYKPYTPSRRFMSVLDSKDITAKSSVKGLLTKLKATAGRNNNGRITSRHKERGAKKLYRIIDFKRNKYNIEGKVAAIEYDPYRNARIALVVYPDGDKRYILQPSGLKVGDSVIAAEGGLDIKVGFAMKLKNIPIGTVVHNIEMHPGAGGQLARSAGMSAQIMGRENKYTILRMPSSEMRYILSECMASVGVVGNEDFINVSIGKAGRNRHRGIRPQTRGSAMNPVDHPHGGGEGKTGTSGHPVSPWGTPAKGYKTRKKKASDKLIISRKKHK.

Residues 212-276 (NRHRGIRPQT…KLIISRKKHK (65 aa)) are disordered. The span at 257-276 (YKTRKKKASDKLIISRKKHK) shows a compositional bias: basic residues.

Belongs to the universal ribosomal protein uL2 family. As to quaternary structure, part of the 50S ribosomal subunit. Forms a bridge to the 30S subunit in the 70S ribosome.

In terms of biological role, one of the primary rRNA binding proteins. Required for association of the 30S and 50S subunits to form the 70S ribosome, for tRNA binding and peptide bond formation. It has been suggested to have peptidyltransferase activity; this is somewhat controversial. Makes several contacts with the 16S rRNA in the 70S ribosome. This chain is Large ribosomal subunit protein uL2, found in Helicobacter pylori (strain P12).